The primary structure comprises 338 residues: Methionine synthase (338 aa).

3 residues coordinate Zn(2+): His211, Cys213, and Cys294.

It belongs to the archaeal MetE family. The cofactor is Zn(2+).

It functions in the pathway amino-acid biosynthesis; L-methionine biosynthesis via de novo pathway. Functionally, catalyzes the transfer of a methyl group to L-homocysteine resulting in methionine formation. The physiological methyl donor is unknown. In Sulfurisphaera tokodaii (strain DSM 16993 / JCM 10545 / NBRC 100140 / 7) (Sulfolobus tokodaii), this protein is Methionine synthase.